The following is a 279-amino-acid chain: NAD kinase (279 aa).

Aspartate 61 (proton acceptor) is an active-site residue. NAD(+) is bound by residues 61–62 (DG), 138–139 (ND), lysine 149, lysine 166, aspartate 168, and 179–184 (TGYSFS).

This sequence belongs to the NAD kinase family. Requires a divalent metal cation as cofactor.

The protein localises to the cytoplasm. It carries out the reaction NAD(+) + ATP = ADP + NADP(+) + H(+). In terms of biological role, involved in the regulation of the intracellular balance of NAD and NADP, and is a key enzyme in the biosynthesis of NADP. Catalyzes specifically the phosphorylation on 2'-hydroxyl of the adenosine moiety of NAD to yield NADP. In Borrelia garinii subsp. bavariensis (strain ATCC BAA-2496 / DSM 23469 / PBi) (Borreliella bavariensis), this protein is NAD kinase.